The primary structure comprises 227 residues: Cytochrome c biogenesis ATP-binding export protein CcmA (227 aa).

The ABC transporter domain maps to 26–227 (LAASGLGFSR…ARTLRLDARS (202 aa)). An ATP-binding site is contributed by 58-65 (GANGSGKT).

Belongs to the ABC transporter superfamily. CcmA exporter (TC 3.A.1.107) family. As to quaternary structure, the complex is composed of two ATP-binding proteins (CcmA) and two transmembrane proteins (CcmB).

Its subcellular location is the cell inner membrane. The catalysed reaction is heme b(in) + ATP + H2O = heme b(out) + ADP + phosphate + H(+). Part of the ABC transporter complex CcmAB involved in the biogenesis of c-type cytochromes; once thought to export heme, this seems not to be the case, but its exact role is uncertain. Responsible for energy coupling to the transport system. The protein is Cytochrome c biogenesis ATP-binding export protein CcmA of Cupriavidus necator (strain ATCC 17699 / DSM 428 / KCTC 22496 / NCIMB 10442 / H16 / Stanier 337) (Ralstonia eutropha).